We begin with the raw amino-acid sequence, 443 residues long: Two-pore potassium channel 2 (443 aa).

Topologically, residues 1–144 are cytoplasmic; sequence MANDGNGDNN…KTDQQSDSKT (144 aa). Positions 67-109 are disordered; the sequence is SLPIDALSQNPSTSSSATTSFSDSTDLLLPLTEPNKPVRKSKP. The segment covering 72-98 has biased composition (low complexity); that stretch reads ALSQNPSTSSSATTSFSDSTDLLLPLT. The helical transmembrane segment at 145–165 threads the bilayer; sequence IVNQAVALLVVYLSLGVLIYW. Positions 181 to 200 form an intramembrane region, pore-forming; the sequence is DALYFCIVTMCTIGYGDITP. A helical transmembrane segment spans residues 208–228; that stretch reads FSIFFVLVGFGFMDILLSGMV. At 229–274 the chain is on the cytoplasmic side; sequence TYVLDLQENYMLETARNESLNLNDRDKVRSYIIDVKKGRMRIRLKV. The helical transmembrane segment at 275 to 295 threads the bilayer; it reads GLALGVVVLCLGFGVLIMHFV. The segment at residues 302–321 is an intramembrane region (pore-forming); sequence DSFYFSVMSVTTVGYGDRAF. Residues 328-348 traverse the membrane as a helical segment; sequence LLAAMWLLVSTLAVARAILFL. Residues 349–443 are Cytoplasmic-facing; that stretch reads AESRVDKRNR…TKDLPTATSI (95 aa). 2 consecutive EF-hand domains span residues 365 to 400 and 404 to 439; these read LGES…KMDK and KDIN…DLPT. The Ca(2+) site is built by aspartate 378, aspartate 380, asparagine 382, cysteine 384, glutamate 389, aspartate 417, serine 421, arginine 423, and aspartate 428.

Belongs to the two pore domain potassium channel (TC 1.A.1.7) family. Homodimer. Expressed in roots, stems, leaves and flowers.

It is found in the vacuole membrane. In terms of biological role, probable voltage-independent potassium-selective tonoplast ion channel. This Arabidopsis thaliana (Mouse-ear cress) protein is Two-pore potassium channel 2 (TPK2).